A 4834-amino-acid chain; its full sequence is E3 ubiquitin-protein ligase HERC2 (4834 aa).

Residues 50–88 are disordered; sequence TESTQNGELPPRKDDSVEPSGTKKEDLNDKEKKDEEETP. Residues 59–84 show a composition bias toward basic and acidic residues; it reads PPRKDDSVEPSGTKKEDLNDKEKKDE. T272 bears the Phosphothreonine mark. The RCC1 1-1 repeat unit spans residues 415 to 461; the sequence is PTSHKGSLQEVIGWGLIGWKYYANVIGPIQCEGLANLGVTQIACAEK. Residues 462–512 form an RCC1 1-2 repeat; it reads RFLILSRNGRVYTQAYNSDTLAPQLVQGLASRNIVKIAAHSDGHHYLALAA. The stretch at 513–568 is one RCC1 1-3 repeat; that stretch reads TGEVYSWGCGDGGRLGHGDTVPLEEPKVISAFSGKQAGKHVVHIACGSTYSAAITA. Residues 569–620 form an RCC1 1-4 repeat; the sequence is EGELYTWGRGNYGRLGHGSSEDEAIPMLVAGLKGLKVIDVACGSGDAQTLAV. Residues 623 to 674 form an RCC1 1-5 repeat; that stretch reads NGQVWSWGDGDYGKLGRGGSDGCKTPKLIEKLQDLDVVKVRCGSQFSIALTK. T647 carries the post-translational modification Phosphothreonine. The RCC1 1-6 repeat unit spans residues 675-726; it reads DGQVYSWGKGDNQRLGHGTEEHVRYPKLLEGLQGKKVIDVAAGSTHCLALTE. The stretch at 728–778 is one RCC1 1-7 repeat; sequence SEVHSWGSNDQCQHFDTLRVTKPEPAALPGLDTKHIVGIACGPAQSFAWSS. Positions 948 to 980 form a coiled coil; it reads LHAAITAEIQDIEAKKEAQKEKEIDEQEANAST. Positions 1207–1283 constitute a Cytochrome b5 heme-binding domain; it reads VTLIRKADLE…MHAFCVGQYL (77 aa). The interval 1555–1575 is disordered; it reads RKKRVPKKPESTDDEEKIGNE. The segment covering 1566 to 1575 has biased composition (acidic residues); sequence TDDEEKIGNE. S1577 carries the phosphoserine modification. The MIB/HERC2 domain occupies 1859 to 1932; that stretch reads SGPELAAMMK…KYDLKLAELP (74 aa). Residues 1933 to 1958 are disordered; it reads AAAQPSAEDSDTEDDSEAEQTERNIH. Over residues 1940–1951 the composition is skewed to acidic residues; sequence EDSDTEDDSEAE. S1942 carries the phosphoserine modification. Residue T1944 is modified to Phosphothreonine. S2454 is subject to Phosphoserine. Residues 2554-2630 form the CPH domain; it reads RADFLSNDDY…RYIHVELIGY (77 aa). Residues 2703–2755 form a ZZ-type zinc finger; the sequence is HPGVTCDGCQMFPINGSRFKCRNCDDFDFCETCFKTKKHNTRHTFGRINEPGQ. Zn(2+) contacts are provided by C2708, C2711, C2723, C2726, C2732, C2735, H2741, and H2745. The DOC domain maps to 2759–2936; the sequence is FCGRSGKQLK…ASDNEEEEDE (178 aa). A Phosphoserine modification is found at S2928. The RCC1 2-1 repeat unit spans residues 2958-3009; it reads RTKVFVWGLNDKDQLGGLKGSKIKVPSFSETLSALNVVQVAGGSKSLFAVTV. An RCC1 2-2 repeat occupies 3010 to 3064; it reads EGKVYACGEATNGRLGLGISSGTVPIPRQITALSSYVVKKVAVHSGGRHATALTV. The RCC1 2-3 repeat unit spans residues 3065 to 3116; it reads DGKVFSWGEGDDGKLGHFSRMNCDKPRLIEALKTKRIRDIACGSSHSAALTS. An RCC1 2-4 repeat occupies 3118–3168; the sequence is GELYTWGLGEYGRLGHGDNTTQLKPKMVKVLLGHRVIQVACGSRDAQTLAL. Residues 3171–3222 form an RCC1 2-5 repeat; it reads EGLVFSWGDGDFGKLGRGGSEGCNIPQNIERLNGQGVCQIECGAQFSLALTK. Residues 3224–3274 form an RCC1 2-6 repeat; sequence GVVWTWGKGDYFRLGHGSDVHVRKPQVVEGLRGKKIVHVAVGALHCLAVTD. The RCC1 2-7 repeat unit spans residues 3275–3326; sequence SGQVYAWGDNDHGQQGNGTTTVNRKPTLVQGLEGQKITRVACGSSHSVAWTT. Polar residues-rich tracts occupy residues 3602–3611 and 3618–3629; these read SQSGRLSSQP and HPYTDDTSTSGT. The segment at 3602-3629 is disordered; the sequence is SQSGRLSSQPVVVESSHPYTDDTSTSGT. The RCC1 3-1 repeat unit spans residues 3951–4002; that stretch reads SGTIYGWGHNHRGQLGGIEGAKVKVPTPCEALATLRPVQLIGGEQTLFAVTA. Residues 4004-4056 form an RCC1 3-2 repeat; sequence GKLYATGYGAGGRLGIGGTESVSTPTLLESIQHVFIKKVAVNSGGKHCLALSS. An RCC1 3-3 repeat occupies 4058-4108; it reads GEVYSWGEAEDGKLGHGNRSPCDRPRVIESLRGIEVVDVAAGGAHSACVTA. The RCC1 3-4 repeat unit spans residues 4110–4162; sequence GDLYTWGKGRYGRLGHSDSEDQLKPKLVEALQGHRVVDIACGSGDAQTLCLTD. One copy of the RCC1 3-5 repeat lies at 4164–4214; it reads DTVWSWGDGDYGKLGRGGSDGCKVPMKIDSLTGLGVVKVECGSQFSVALTK. The stretch at 4216–4266 is one RCC1 3-6 repeat; sequence GAVYTWGKGDYHRLGHGSDDHVRRPRQVQGLQGKKVIAIATGSLHCVCCTE. The stretch at 4268–4318 is one RCC1 3-7 repeat; the sequence is GEVYTWGDNDEGQLGDGTTNAIQRPRLVAALQGKKVNRVACGSAHTLAWST. In terms of domain architecture, HECT spans 4457 to 4794; sequence DSLLLPHRVW…IHFCKSIDTD (338 aa). Residue C4762 is the Glycyl thioester intermediate of the active site. Residues 4804–4834 are disordered; the sequence is EPAADDSSDDSDNEDVDSFASDSTQDYLTGH. Acidic residues predominate over residues 4806 to 4820; that stretch reads AADDSSDDSDNEDVD. 3 positions are modified to phosphoserine: S4810, S4811, and S4814. The segment covering 4823–4834 has biased composition (polar residues); it reads ASDSTQDYLTGH. T4827 carries the post-translational modification Phosphothreonine.

As to quaternary structure, interacts (when phosphorylated at Thr-4827 and sumoylated) with RNF8 (via FHA domain); this interaction increases after ionizing radiation (IR) treatment. Interacts with XPA. Interacts with NEURL4. Via its interaction with NEURL4, may indirectly interact with CCP110 and CEP97. Phosphorylation at Thr-4827 is required for interaction with RNF8. Post-translationally, sumoylated with SUMO1 by PIAS4 in response to double-strand breaks (DSBs), promoting the interaction with RNF8.

The protein localises to the cytoplasm. The protein resides in the cytoskeleton. It is found in the microtubule organizing center. It localises to the centrosome. Its subcellular location is the centriole. The protein localises to the nucleus. The catalysed reaction is S-ubiquitinyl-[E2 ubiquitin-conjugating enzyme]-L-cysteine + [acceptor protein]-L-lysine = [E2 ubiquitin-conjugating enzyme]-L-cysteine + N(6)-ubiquitinyl-[acceptor protein]-L-lysine.. Its pathway is protein modification; protein ubiquitination. E3 ubiquitin-protein ligase that regulates ubiquitin-dependent retention of repair proteins on damaged chromosomes. Recruited to sites of DNA damage in response to ionizing radiation (IR) and facilitates the assembly of UBE2N and RNF8 promoting DNA damage-induced formation of 'Lys-63'-linked ubiquitin chains. Acts as a mediator of binding specificity between UBE2N and RNF8. Involved in the maintenance of RNF168 levels. E3 ubiquitin-protein ligase that promotes the ubiquitination and proteasomal degradation of XPA which influences the circadian oscillation of DNA excision repair activity. By controlling the steady-state expression of the IGF1R receptor, indirectly regulates the insulin-like growth factor receptor signaling pathway. Also modulates iron metabolism by regulating the basal turnover of FBXL5. This Homo sapiens (Human) protein is E3 ubiquitin-protein ligase HERC2.